The following is a 449-amino-acid chain: C4-dicarboxylate transport protein (449 aa).

The next 9 membrane-spanning stretches (helical) occupy residues alanine 5–glycine 25, leucine 45–methionine 65, leucine 77–valine 97, glycine 149–glycine 169, valine 185–methionine 205, cysteine 231–isoleucine 251, glycine 298–alanine 318, threonine 332–phenylalanine 352, and isoleucine 353–isoleucine 373.

The protein belongs to the dicarboxylate/amino acid:cation symporter (DAACS) (TC 2.A.23) family.

It localises to the cell inner membrane. In terms of biological role, responsible for the transport of dicarboxylates such as succinate, fumarate, and malate from the periplasm across the membrane. The sequence is that of C4-dicarboxylate transport protein from Dechloromonas aromatica (strain RCB).